Reading from the N-terminus, the 152-residue chain is Putative superoxide dismutase [Cu-Zn] (152 aa).

3 residues coordinate Cu cation: His43, His45, and His60. Cysteines 54 and 144 form a disulfide. Residues His60, His68, His77, and Asp80 each coordinate Zn(2+). His118 is a Cu cation binding site.

Belongs to the Cu-Zn superoxide dismutase family. Cu cation is required as a cofactor. Requires Zn(2+) as cofactor.

The enzyme catalyses 2 superoxide + 2 H(+) = H2O2 + O2. In terms of biological role, destroys radicals which are normally produced within the cells and which are toxic to biological systems. This is Putative superoxide dismutase [Cu-Zn] (SOD) from Orgyia pseudotsugata (Douglas-fir tussock moth).